Consider the following 552-residue polypeptide: Hydroxylamine reductase (552 aa).

4 residues coordinate [2Fe-2S] cluster: C5, C8, C20, and C27. Residues H251, E275, C319, C407, C435, C460, E494, and K496 each contribute to the hybrid [4Fe-2O-2S] cluster site. C407 is subject to Cysteine persulfide.

Belongs to the HCP family. [2Fe-2S] cluster serves as cofactor. It depends on hybrid [4Fe-2O-2S] cluster as a cofactor.

The protein resides in the cytoplasm. The catalysed reaction is A + NH4(+) + H2O = hydroxylamine + AH2 + H(+). Functionally, catalyzes the reduction of hydroxylamine to form NH(3) and H(2)O. This chain is Hydroxylamine reductase, found in Shigella flexneri.